A 69-amino-acid chain; its full sequence is Putative membrane protein insertion efficiency factor (69 aa).

It belongs to the UPF0161 family.

It localises to the cell membrane. Could be involved in insertion of integral membrane proteins into the membrane. This Clostridium perfringens (strain SM101 / Type A) protein is Putative membrane protein insertion efficiency factor.